The primary structure comprises 215 residues: Probable GTP-binding protein EngB (215 aa).

Residues glutamate 26–proline 200 form the EngB-type G domain. GTP-binding positions include glycine 34–serine 41, glycine 61–leucine 65, aspartate 79–glycine 82, threonine 146–aspartate 149, and phenylalanine 179–serine 181. Residues serine 41 and threonine 63 each coordinate Mg(2+).

Belongs to the TRAFAC class TrmE-Era-EngA-EngB-Septin-like GTPase superfamily. EngB GTPase family. It depends on Mg(2+) as a cofactor.

Necessary for normal cell division and for the maintenance of normal septation. The sequence is that of Probable GTP-binding protein EngB from Aliivibrio fischeri (strain MJ11) (Vibrio fischeri).